Reading from the N-terminus, the 380-residue chain is ATP phosphoribosyltransferase regulatory subunit (380 aa).

Belongs to the class-II aminoacyl-tRNA synthetase family. HisZ subfamily. Heteromultimer composed of HisG and HisZ subunits.

Its subcellular location is the cytoplasm. The protein operates within amino-acid biosynthesis; L-histidine biosynthesis; L-histidine from 5-phospho-alpha-D-ribose 1-diphosphate: step 1/9. Its function is as follows. Required for the first step of histidine biosynthesis. May allow the feedback regulation of ATP phosphoribosyltransferase activity by histidine. In Thermoanaerobacter pseudethanolicus (strain ATCC 33223 / 39E) (Clostridium thermohydrosulfuricum), this protein is ATP phosphoribosyltransferase regulatory subunit.